A 228-amino-acid polypeptide reads, in one-letter code: uncharacterized protein (228 aa).

This is an uncharacterized protein from Methanocaldococcus jannaschii (strain ATCC 43067 / DSM 2661 / JAL-1 / JCM 10045 / NBRC 100440) (Methanococcus jannaschii).